A 1183-amino-acid chain; its full sequence is Formin-like protein (1183 aa).

Disordered regions lie at residues 1–44 (MGAV…SISS) and 63–82 (QHVR…PTTD). The span at 23–36 (PHSHAHHHSMRNGH) shows a compositional bias: basic residues. Residues 63–79 (QHVRQPSLRSRSQQPMP) show a composition bias toward polar residues. Residues 76–559 (QPMPTTDELD…HNEQELKKRD (484 aa)) form the GBD/FH3 domain. S225 is subject to Phosphoserine. Over residues 572-584 (LSRSLPRSASSGD) the composition is skewed to polar residues. A disordered region spans residues 572–681 (LSRSLPRSAS…PPVAGFMPAP (110 aa)). 2 stretches are compositionally biased toward pro residues: residues 605 to 614 (LPPPPPPMPA) and 622 to 640 (APPP…PPGF). Residues 641–654 (SPLGSPSGSLASTA) show a composition bias toward low complexity. Residues 687-1088 (IKRKVPTKYK…AALAASKKEN (402 aa)) form the FH2 domain. The DAD domain occupies 1136-1169 (DEVYNGALEDILLGLKSEPYRRADAVRRSQRRRI).

It belongs to the formin homology family. As to quaternary structure, self-associates. Interacts (via GBD/FH3 domain) with Cdc42; the interaction is stronger with the GTP bound form of Cdc42.

In terms of biological role, together with Cdc42, involved in establishment of planar cell polarity in the developing compound eye by contributing to ommatidial rotation. Together with DAAM and Cdc42, has a role in neuronal development of mushroom bodies. In Drosophila melanogaster (Fruit fly), this protein is Formin-like protein.